We begin with the raw amino-acid sequence, 395 residues long: MFSDLRKKFVFLTMSILIVVVLFLFAVSNRYNQYWDEYDAYRIVKLVAKNDYLGIPGDEPIALVTIDNQKMVKIQSNNTDLTNDVIEKSSLKLLEQGKKSRKWKSFIYSIKEYKDKTYTIAIMDLASYEVPYARRFLILVFTIFGFCLLAAVSLYLSRFIVGPVETEMTREKQFVSDASHELKTPIAAIRANVQVLEQQIPGNRYLDHVVSETKRMEFLIEDLLNLSRLDEKRSKVNFKKLNLSVLCQEVLLTYESLAYEEEKCLNDTIEDDVWIVGEESQIKQILIILLDNAIRHSLSKSAIQFSLKQARRKAILTISNPSAIYSKEVMDNLFERFYQAKDDHADSLSFGLGLSIAKAIVERHKGRIRAYQEKDQLRLEVQLPIDGFWTNTMIN.

A run of 2 helical transmembrane segments spans residues 9–29 (FVFL…AVSN) and 136–156 (FLIL…SLYL). A Histidine kinase domain is found at 177–387 (DASHELKTPI…RLEVQLPIDG (211 aa)). Histidine 180 carries the phosphohistidine; by autocatalysis modification.

The protein localises to the cell membrane. The catalysed reaction is ATP + protein L-histidine = ADP + protein N-phospho-L-histidine.. Member of the two-component regulatory system DltS/DltR. Regulates the expression of the dlt operon. Probably phosphorylates DltR. The chain is Sensor protein DltS (dltS) from Streptococcus agalactiae serotype V (strain ATCC BAA-611 / 2603 V/R).